Here is a 658-residue protein sequence, read N- to C-terminus: Integrator complex subunit 9 (658 aa).

K58 participates in a covalent cross-link: Glycyl lysine isopeptide (Lys-Gly) (interchain with G-Cter in SUMO2). Positions 548-572 are disordered; it reads DNKHVLQPPPKPTQPTSSKKRKRVN. The Nuclear localization signal motif lies at 566–570; the sequence is KKRKR.

The protein belongs to the metallo-beta-lactamase superfamily. RNA-metabolizing metallo-beta-lactamase-like family. INTS9 subfamily. Component of the Integrator complex, composed of core subunits INTS1, INTS2, INTS3, INTS4, INTS5, INTS6, INTS7, INTS8, INTS9/RC74, INTS10, INTS11/CPSF3L, INTS12, INTS13, INTS14 and INTS15. The core complex associates with protein phosphatase 2A subunits PPP2CA and PPP2R1A, to form the Integrator-PP2A (INTAC) complex. INTS9 is part of the RNA endonuclease subcomplex, composed of INTS4, INTS9, INTS11 and inositol hexakisphosphate (InsP6). Interacts with WDR73; interaction is required for the assembly of the RNA endonuclease subcomplex in the cytoplasm. Interacts with BRAT1; interaction is required for the assembly of the RNA endonuclease subcomplex. Interacts with ESRRB, ESRRB is not a core component of the Integrator complex and this association is a bridge for the interaction with the multiprotein complex Integrator; attracts the transcriptional machinery.

It is found in the nucleus. Its subcellular location is the cytoplasm. Component of the integrator complex, a multiprotein complex that terminates RNA polymerase II (Pol II) transcription in the promoter-proximal region of genes. The integrator complex provides a quality checkpoint during transcription elongation by driving premature transcription termination of transcripts that are unfavorably configured for transcriptional elongation: the complex terminates transcription by (1) catalyzing dephosphorylation of the C-terminal domain (CTD) of Pol II subunit POLR2A/RPB1 and SUPT5H/SPT5, (2) degrading the exiting nascent RNA transcript via endonuclease activity and (3) promoting the release of Pol II from bound DNA. The integrator complex is also involved in terminating the synthesis of non-coding Pol II transcripts, such as enhancer RNAs (eRNAs), small nuclear RNAs (snRNAs), telomerase RNAs and long non-coding RNAs (lncRNAs). Mediates recruitment of cytoplasmic dynein to the nuclear envelope, probably as component of the integrator complex. The chain is Integrator complex subunit 9 (Ints9) from Mus musculus (Mouse).